We begin with the raw amino-acid sequence, 657 residues long: Protein mono-ADP-ribosyltransferase TIPARP (657 aa).

Residues 1–10 (MEVETTEPEP) are compositionally biased toward acidic residues. The segment at 1 to 22 (MEVETTEPEPDCVVQPPSPSDD) is disordered. At C39 the chain carries ADP-ribosylcysteine. Positions 41-48 (KKKQEQKR) match the Nuclear localization signal motif. The segment at 121 to 154 (QLPEAHPSTDAPEQGVPIQDHSFPPETISGTVAD) is disordered. A C3H1-type zinc finger spans residues 238–265 (ENGIEICMDFLQGTCIYGRDCLKHHTVL). Residues 333–411 (STPPCSNSNS…RRPLFRSCFI (79 aa)) form the WWE domain. One can recognise a PARP catalytic domain in the interval 449–657 (YPETWVYMHP…YEEVSNTVSI (209 aa)).

Belongs to the ARTD/PARP family. Interacts with AHR. Auto-mono-ADP-ribosylated. In terms of tissue distribution, ubiquitously expressed.

It localises to the nucleus. It carries out the reaction L-aspartyl-[protein] + NAD(+) = 4-O-(ADP-D-ribosyl)-L-aspartyl-[protein] + nicotinamide. It catalyses the reaction L-glutamyl-[protein] + NAD(+) = 5-O-(ADP-D-ribosyl)-L-glutamyl-[protein] + nicotinamide. The catalysed reaction is L-cysteinyl-[protein] + NAD(+) = S-(ADP-D-ribosyl)-L-cysteinyl-[protein] + nicotinamide + H(+). Functionally, ADP-ribosyltransferase that mediates mono-ADP-ribosylation of glutamate, aspartate and cysteine residues on target proteins. Acts as a negative regulator of AHR by mediating mono-ADP-ribosylation of AHR, leading to inhibit transcription activator activity of AHR. This is Protein mono-ADP-ribosyltransferase TIPARP from Mus musculus (Mouse).